The following is a 724-amino-acid chain: Aquaglyceroporin-4 (724 aa).

Disordered stretches follow at residues 1 to 167 (MADE…SIRR), 248 to 267 (INMA…NQAD), and 302 to 396 (AHGL…DLDG). At 1 to 434 (MADEEIKPTS…VIRLRFREPL (434 aa)) the chain is on the cytoplasmic side. Polar residues predominate over residues 87–96 (LTGQVPQDND). Residues 252-265 (QQQQQQQQQQPQNQ) show a composition bias toward low complexity. Composition is skewed to polar residues over residues 307 to 325 (SPTN…TAPS) and 360 to 370 (PSQTSQNSQNE). Residues 435–455 (AELLAVTCQLTLGFCADLVVV) form a helical membrane-spanning segment. Residues 456–472 (TSGKNASPAGNEATTDW) lie on the Extracellular side of the membrane. A helical transmembrane segment spans residues 473 to 493 (AWGLASMLGIYIAGGISGAHL). The NPA 1 motif lies at 494-496 (NPA). The Cytoplasmic segment spans residues 494–513 (NPAISIMLWIYRGFPLRKVP). Residues 514–534 (MYVLAQILGAFIAALISFGLY) traverse the membrane as a helical segment. At 535–567 (QTNIVEYGGTDLKTSDTMGAFITYPRYPWINAS) the chain is on the extracellular side. N-linked (GlcNAc...) asparagine glycosylation is present at Asn-565. The chain crosses the membrane as a helical span at residues 568 to 588 (TSFFTEFVGTAILAVAVLALG). At 589 to 595 (DDMNAPP) the chain is on the cytoplasmic side. Residues 596–616 (GAGMSAFILGLVITVLSMAFG) form a helical membrane-spanning segment. Over 617–647 (YNTGAALNPSRDLGPRLALAALGYGKDLFTD) the chain is Extracellular. The NPA 2 motif lies at 624–626 (NPS). The chain crosses the membrane as a helical span at residues 648–668 (VYWIWGNWCAPILGAIFGAFL). The Cytoplasmic segment spans residues 669 to 724 (YDAAIFAGGESPVNYPRKRIKRAGHKWRKKWGVRLRKMKPAKKGEDEAYRRWKESQ).

Belongs to the MIP/aquaporin (TC 1.A.8) family.

The protein localises to the membrane. It carries out the reaction H2O(in) = H2O(out). The catalysed reaction is glycerol(in) = glycerol(out). Water channel required to facilitate the transport of water across membranes. May play a role in the vegetative growth. This chain is Aquaglyceroporin-4, found in Botryotinia fuckeliana (strain B05.10) (Noble rot fungus).